A 511-amino-acid chain; its full sequence is Cytochrome P450 4B1 (511 aa).

E315 provides a ligand contact to heme. S436 bears the Phosphoserine mark. C453 contacts heme.

It belongs to the cytochrome P450 family. It depends on heme as a cofactor. Detected in the liver and lung (at protein level).

It localises to the endoplasmic reticulum membrane. It is found in the microsome membrane. It carries out the reaction an organic molecule + reduced [NADPH--hemoprotein reductase] + O2 = an alcohol + oxidized [NADPH--hemoprotein reductase] + H2O + H(+). In terms of biological role, cytochromes P450 are a group of heme-thiolate monooxygenases. In liver microsomes, this enzyme is involved in an NADPH-dependent electron transport pathway. It oxidizes a variety of structurally unrelated compounds, including steroids, fatty acids, and xenobiotics. This Homo sapiens (Human) protein is Cytochrome P450 4B1 (CYP4B1).